Consider the following 293-residue polypeptide: MMRIALFLLTNLGVMVVFGLILSLTGIQSSSVMGLMIMAGLFGFGGAFVSLLMSKWMALRSVGGEVIEQPRNETERWLLDTIAKQSQQAGIAMPQVAIYHAPDINAFATGARRDASLVAVSTGLLQNMSRDEAEAVLAHEVSHIANGDMVTMTLIQGIVNTFVIFISRILAQLAAGFMSGDREEEGNSNGNPMVYFVVSMVLELVFGIVASTITMWFSRHREFHADAGAARLAGSEKMIAALQRLKTSYEPQEASSMMALCINGKSKSISELFMSHPPLDKRIEALRSGQYAR.

A run of 2 helical transmembrane segments spans residues 4–24 and 32–52; these read IALF…ILSL and VMGL…VSLL. A Zn(2+)-binding site is contributed by H139. E140 is an active-site residue. Zn(2+) is bound at residue H143. A run of 2 helical transmembrane segments spans residues 158–178 and 193–213; these read IVNT…AGFM and MVYF…ASTI. E222 is a Zn(2+) binding site.

It belongs to the peptidase M48B family. Requires Zn(2+) as cofactor.

It is found in the cell inner membrane. This chain is Protease HtpX, found in Erwinia tasmaniensis (strain DSM 17950 / CFBP 7177 / CIP 109463 / NCPPB 4357 / Et1/99).